A 181-amino-acid polypeptide reads, in one-letter code: Ubiquitin-like protein 4B (181 aa).

Residues Met1 to Lys76 form the Ubiquitin-like domain. The disordered stretch occupies residues Pro139–Lys181. 2 stretches are compositionally biased toward basic and acidic residues: residues Arg151–Arg161 and Ala168–Lys181.

Its subcellular location is the cytoplasm. The sequence is that of Ubiquitin-like protein 4B (UBL4B) from Monodelphis domestica (Gray short-tailed opossum).